Reading from the N-terminus, the 365-residue chain is Tartrate dehydrogenase/decarboxylase (365 aa).

The Mn(2+) site is built by Asp225, Asp250, and Asp254.

This sequence belongs to the isocitrate and isopropylmalate dehydrogenases family. As to quaternary structure, homodimer. It depends on Mg(2+) as a cofactor. The cofactor is Mn(2+). K(+) is required as a cofactor.

The protein localises to the cytoplasm. The enzyme catalyses tartrate + NAD(+) = 2-hydroxy-3-oxosuccinate + NADH + H(+). It carries out the reaction (2R,3S)-tartrate + NAD(+) = 2-hydroxy-3-oxosuccinate + NADH + H(+). It catalyses the reaction (2R,3R)-tartrate + NAD(+) = 2-hydroxy-3-oxosuccinate + NADH + H(+). The catalysed reaction is (2R,3R)-tartrate + H(+) = (R)-glycerate + CO2. The enzyme catalyses (R)-malate + NAD(+) = pyruvate + CO2 + NADH. It participates in carbohydrate acid metabolism; tartrate degradation; 2-hydroxy-3-oxosuccinate from L-tartrate: step 1/1. It functions in the pathway carbohydrate acid metabolism; tartrate degradation; 2-hydroxy-3-oxosuccinate from meso-tartrate: step 1/1. Its pathway is carbohydrate acid metabolism; tartrate degradation; D-glycerate from L-tartrate: step 1/1. Its function is as follows. Has multiple catalytic activities. Apart from catalyzing the oxidation of (+)-tartrate to oxaloglycolate, also converts meso-tartrate to D-glycerate and catalyzes the oxidative decarboxylation of D-malate to pyruvate. This is Tartrate dehydrogenase/decarboxylase from Pseudomonas putida (Arthrobacter siderocapsulatus).